A 132-amino-acid polypeptide reads, in one-letter code: Small ribosomal subunit protein uS8 (132 aa).

Belongs to the universal ribosomal protein uS8 family. Part of the 30S ribosomal subunit. Contacts proteins S5 and S12.

Functionally, one of the primary rRNA binding proteins, it binds directly to 16S rRNA central domain where it helps coordinate assembly of the platform of the 30S subunit. This chain is Small ribosomal subunit protein uS8, found in Leuconostoc mesenteroides subsp. mesenteroides (strain ATCC 8293 / DSM 20343 / BCRC 11652 / CCM 1803 / JCM 6124 / NCDO 523 / NBRC 100496 / NCIMB 8023 / NCTC 12954 / NRRL B-1118 / 37Y).